The following is a 581-amino-acid chain: NADH-quinone oxidoreductase subunit C/D (581 aa).

The NADH dehydrogenase I subunit C stretch occupies residues 1 to 172 (MSAFELVTEL…PLFNMTASLF (172 aa)). The NADH dehydrogenase I subunit D stretch occupies residues 196-581 (ELMILNYGPH…IDYVMSDVDR (386 aa)).

It in the N-terminal section; belongs to the complex I 30 kDa subunit family. This sequence in the C-terminal section; belongs to the complex I 49 kDa subunit family. In terms of assembly, NDH-1 is composed of 13 different subunits. Subunits NuoB, CD, E, F, and G constitute the peripheral sector of the complex.

It localises to the cell inner membrane. It carries out the reaction a quinone + NADH + 5 H(+)(in) = a quinol + NAD(+) + 4 H(+)(out). In terms of biological role, NDH-1 shuttles electrons from NADH, via FMN and iron-sulfur (Fe-S) centers, to quinones in the respiratory chain. The immediate electron acceptor for the enzyme in this species is believed to be ubiquinone. Couples the redox reaction to proton translocation (for every two electrons transferred, four hydrogen ions are translocated across the cytoplasmic membrane), and thus conserves the redox energy in a proton gradient. This is NADH-quinone oxidoreductase subunit C/D from Rhodopseudomonas palustris (strain ATCC BAA-98 / CGA009).